Consider the following 86-residue polypeptide: Cell division topological specificity factor (86 aa).

It belongs to the MinE family.

Prevents the cell division inhibition by proteins MinC and MinD at internal division sites while permitting inhibition at polar sites. This ensures cell division at the proper site by restricting the formation of a division septum at the midpoint of the long axis of the cell. This chain is Cell division topological specificity factor, found in Shewanella pealeana (strain ATCC 700345 / ANG-SQ1).